Consider the following 296-residue polypeptide: Protoheme IX farnesyltransferase (296 aa).

Topologically, residues 1–9 are cytoplasmic; the sequence is MMFKQYLQV. The helical transmembrane segment at 10-28 threads the bilayer; the sequence is TKPGIIFGNLISVIGGFLL. Residues 29–37 are Periplasmic-facing; it reads ASKGSIDYP. The chain crosses the membrane as a helical span at residues 38-56; sequence LFIYTLVGVSLVVASGCVF. Residues 57–78 are Cytoplasmic-facing; it reads NNYIDRDIDRKMERTKNRVLVK. A helical transmembrane segment spans residues 79–97; that stretch reads GLISPAVSLVYATLLGIAG. The Periplasmic segment spans residues 98-107; it reads FMLLWFGANP. The chain crosses the membrane as a helical span at residues 108–126; sequence LACWLGVMGFVVYVGVYSL. Residues 127–197 lie on the Cytoplasmic side of the membrane; that stretch reads YMKRHSVYGT…YQAANIPVLP (71 aa). A helical membrane pass occupies residues 198 to 216; the sequence is VVKGISVAKNHITLYIIAF. Topologically, residues 217–228 are periplasmic; that stretch reads AVATLMLSLGGY. A helical transmembrane segment spans residues 229–247; it reads AGYKYLVVAAAVSVWWLGM. Over 248-268 the chain is Cytoplasmic; that stretch reads ALRGYKVADDRIWARKLFGFS. The helical transmembrane segment at 269-287 threads the bilayer; sequence IIAITALSVMMSVDFMVPD. Over 288–296 the chain is Periplasmic; sequence SHTLLAAVW.

The protein belongs to the UbiA prenyltransferase family. Protoheme IX farnesyltransferase subfamily.

It localises to the cell inner membrane. The enzyme catalyses heme b + (2E,6E)-farnesyl diphosphate + H2O = Fe(II)-heme o + diphosphate. The protein operates within porphyrin-containing compound metabolism; heme O biosynthesis; heme O from protoheme: step 1/1. Its function is as follows. Converts heme B (protoheme IX) to heme O by substitution of the vinyl group on carbon 2 of heme B porphyrin ring with a hydroxyethyl farnesyl side group. This chain is Protoheme IX farnesyltransferase, found in Escherichia coli O139:H28 (strain E24377A / ETEC).